The sequence spans 311 residues: Mediator of RNA polymerase II transcription subunit 27-B (311 aa).

The protein belongs to the Mediator complex subunit 27 family. As to quaternary structure, component of the Mediator complex.

The protein resides in the nucleus. Its function is as follows. Component of the Mediator complex, a coactivator involved in the regulated transcription of nearly all RNA polymerase II-dependent genes. Mediator functions as a bridge to convey information from gene-specific regulatory proteins to the basal RNA polymerase II transcription machinery. Mediator is recruited to promoters by direct interactions with regulatory proteins and serves as a scaffold for the assembly of a functional preinitiation complex with RNA polymerase II and the general transcription factors. The protein is Mediator of RNA polymerase II transcription subunit 27-B (med27-b) of Xenopus laevis (African clawed frog).